The primary structure comprises 670 residues: Microtubule-associated protein ssm4 (670 aa).

One can recognise a CAP-Gly domain in the interval 23 to 65; the sequence is GSTDFESGIWLGVELLNGKGKNDGSVKGKRYFSCEKGKGIFVR. Coiled-coil stretches lie at residues 209 to 254 and 404 to 582; these read KSEL…KNSI and VKTR…KLAD. Phosphoserine is present on S460. Phosphothreonine is present on T606.

It localises to the cytoplasm. Its subcellular location is the cytoskeleton. The protein resides in the spindle. Functionally, binds to nuclear microtubules with the effect of either modifying their structure or function. This then promotes meiotic nuclear division. In Schizosaccharomyces pombe (strain 972 / ATCC 24843) (Fission yeast), this protein is Microtubule-associated protein ssm4 (ssm4).